We begin with the raw amino-acid sequence, 349 residues long: MTEPLKPRIDFPGTLEQERAEAFKAAQAFSGPQAENFAPAVAEELLSDEGPAEAVVEAALRPKRSLWRKMVTAGLTLFGISVVGQGVQWTMNAWQTQDWVALGGCAAGALIIGAGVGSVATEWRRLWRLRQRAHERDEARDLFHSHATGKGRAFCEKLASQAGIDQSHPALQRWYAAIHETQSDREIVSLYASIVQPVLDSQARREISRSAAESTLMIAVSPLALVDMAFIAWRNLRLINRIARLYGIELGYYSRLRLFRLVLLNMAFAGASELVREVGMDWMSQDLAARLSTRAAQGIGAGLLTARLGIKAMELCRPLPWLNDDKPRLGDFRRELIGQLKETLSKKPQ.

The next 3 membrane-spanning stretches (helical) occupy residues 70–90 (MVTAGLTLFGISVVGQGVQWT), 99–119 (WVALGGCAAGALIIGAGVGSV), and 213–233 (ESTLMIAVSPLALVDMAFIAW).

The protein belongs to the UPF0283 family.

It is found in the cell inner membrane. This is UPF0283 membrane protein Ent638_2153 from Enterobacter sp. (strain 638).